We begin with the raw amino-acid sequence, 320 residues long: Cytochrome f (320 aa).

The first 35 residues, 1 to 35, serve as a signal peptide directing secretion; the sequence is MHTKNLFYSRTQQITQYLSALLMMVILTRTSISSA. Heme contacts are provided by tyrosine 36, cysteine 56, cysteine 59, and histidine 60. Residues 286–306 traverse the membrane as a helical segment; the sequence is VQVLLFFFASIILAQIFLVLK.

Belongs to the cytochrome f family. As to quaternary structure, the 4 large subunits of the cytochrome b6-f complex are cytochrome b6, subunit IV (17 kDa polypeptide, petD), cytochrome f and the Rieske protein, while the 4 small subunits are PetG, PetL, PetM and PetN. The complex functions as a dimer. Heme is required as a cofactor.

The protein resides in the plastid thylakoid membrane. In terms of biological role, component of the cytochrome b6-f complex, which mediates electron transfer between photosystem II (PSII) and photosystem I (PSI), cyclic electron flow around PSI, and state transitions. The sequence is that of Cytochrome f from Cuscuta gronovii (Common dodder).